Consider the following 789-residue polypeptide: Glycerol-3-phosphate acyltransferase (789 aa).

The short motif at 275–280 (SHRSYI) is the HXXXXD motif element.

This sequence belongs to the GPAT/DAPAT family.

The protein resides in the cell membrane. It catalyses the reaction sn-glycerol 3-phosphate + an acyl-CoA = a 1-acyl-sn-glycero-3-phosphate + CoA. It participates in phospholipid metabolism; CDP-diacylglycerol biosynthesis; CDP-diacylglycerol from sn-glycerol 3-phosphate: step 1/3. The protein is Glycerol-3-phosphate acyltransferase of Mycobacterium bovis (strain BCG / Pasteur 1173P2).